The following is a 340-amino-acid chain: Probable quinone oxidoreductase (340 aa).

The protein belongs to the zinc-containing alcohol dehydrogenase family. Quinone oxidoreductase subfamily.

The catalysed reaction is 2 a quinone + NADPH + H(+) = 2 a 1,4-benzosemiquinone + NADP(+). This Leishmania amazonensis protein is Probable quinone oxidoreductase.